The chain runs to 30 residues: Kalata-B14 (30 aa).

Residues 1–30 (GLPVCGESCFGGTCNTPGCACDPWPVCTRD) constitute a cross-link (cyclopeptide (Gly-Asp)). Cystine bridges form between Cys-5/Cys-19, Cys-9/Cys-21, and Cys-14/Cys-27.

This is a cyclic peptide.

Probably participates in a plant defense mechanism. The protein is Kalata-B14 of Oldenlandia affinis.